The chain runs to 376 residues: DnaJ homolog subfamily B member 12 (376 aa).

Met1 carries the post-translational modification N-acetylmethionine. The segment at 45–97 (ALIESLNQKPQSTGDHPQPTDTTHTTTKKAGGTETPSANGEAGGGESAKGYTS) is disordered. Residues 57–84 (TGDHPQPTDTTHTTTKKAGGTETPSANG) show a composition bias toward low complexity. A J domain is found at 111–175 (DYYEILGVSR…EKRKQYDQFG (65 aa)). His186 bears the Pros-methylhistidine mark. The chain crosses the membrane as a helical span at residues 243 to 263 (GGLGVFVQLMPILILILVSAL).

Belongs to the DnaJ family. DNAJB12/DNAJB14 subfamily. As to quaternary structure, homodimer and homotetramer. Interacts (via J domain) with HSPA8/Hsc70. Forms a multiprotein complex, at least composed of DNAJB12, DNAJB14, HSPA8/Hsc70 and SGTA; interaction with DNAJB14 and HSPA8/Hsc70 is direct. Methylated at His-186 by METTL9.

It is found in the endoplasmic reticulum membrane. It localises to the nucleus membrane. In terms of biological role, acts as a co-chaperone with HSPA8/Hsc70; required to promote protein folding and trafficking, prevent aggregation of client proteins, and promote unfolded proteins to endoplasmic reticulum-associated degradation (ERAD) pathway. Acts by determining HSPA8/Hsc70's ATPase and polypeptide-binding activities. Can also act independently of HSPA8/Hsc70: together with DNAJB14, acts as a chaperone that promotes maturation of potassium channels KCND2 and KCNH2 by stabilizing nascent channel subunits and assembling them into tetramers. While stabilization of nascent channel proteins is dependent on HSPA8/Hsc70, the process of oligomerization of channel subunits is independent of HSPA8/Hsc70. When overexpressed, forms membranous structures together with DNAJB14 and HSPA8/Hsc70 within the nucleus; the role of these structures, named DJANGOs, is still unclear. In Mus musculus (Mouse), this protein is DnaJ homolog subfamily B member 12.